The following is a 266-amino-acid chain: GTP cyclohydrolase III (266 aa).

It belongs to the archaeal-type GTP cyclohydrolase family.

The catalysed reaction is GTP + 3 H2O = 2-amino-5-formylamino-6-(5-phospho-D-ribosylamino)pyrimidin-4(3H)-one + 2 phosphate + 2 H(+). Its function is as follows. Catalyzes the formation of 2-amino-5-formylamino-6-ribofuranosylamino-4(3H)-pyrimidinone ribonucleotide monophosphate and inorganic phosphate from GTP. Also has an independent pyrophosphate phosphohydrolase activity. The sequence is that of GTP cyclohydrolase III from Methanococcus vannielii (strain ATCC 35089 / DSM 1224 / JCM 13029 / OCM 148 / SB).